We begin with the raw amino-acid sequence, 358 residues long: Probable tartrate dehydrogenase/decarboxylase TtuC' (358 aa).

Mn(2+) contacts are provided by Asp222, Asp246, and Asp250.

Belongs to the isocitrate and isopropylmalate dehydrogenases family. It depends on Mg(2+) as a cofactor. Mn(2+) serves as cofactor. K(+) is required as a cofactor.

The protein localises to the cytoplasm. It carries out the reaction tartrate + NAD(+) = 2-hydroxy-3-oxosuccinate + NADH + H(+). The enzyme catalyses (2R,3S)-tartrate + NAD(+) = 2-hydroxy-3-oxosuccinate + NADH + H(+). The catalysed reaction is (2R,3R)-tartrate + NAD(+) = 2-hydroxy-3-oxosuccinate + NADH + H(+). It catalyses the reaction (2R,3R)-tartrate + H(+) = (R)-glycerate + CO2. It carries out the reaction (R)-malate + NAD(+) = pyruvate + CO2 + NADH. The protein operates within carbohydrate acid metabolism; tartrate degradation; 2-hydroxy-3-oxosuccinate from L-tartrate: step 1/1. It participates in carbohydrate acid metabolism; tartrate degradation; 2-hydroxy-3-oxosuccinate from meso-tartrate: step 1/1. Its pathway is carbohydrate acid metabolism; tartrate degradation; D-glycerate from L-tartrate: step 1/1. In terms of biological role, has multiple catalytic activities. Apart from catalyzing the oxidation of (+)-tartrate to oxaloglycolate, also converts meso-tartrate to D-glycerate and catalyzes the oxidative decarboxylation of D-malate to pyruvate. This chain is Probable tartrate dehydrogenase/decarboxylase TtuC' (ttuC'), found in Agrobacterium vitis (Rhizobium vitis).